The chain runs to 536 residues: Copine-1 (536 aa).

C2 domains are found at residues 1–113 (MAHC…TLPL) and 122–244 (GRGT…ECIH). Residues D21, D27, D79, D81, D91, D152, and D158 each contribute to the Ca(2+) site. K170 carries the post-translational modification N6-acetyllysine. Positions 213, 215, and 221 each coordinate Ca(2+). The 203-residue stretch at 282–484 (QINFTVGVDF…AARDIVQFVP (203 aa)) folds into the VWFA domain.

Belongs to the copine family. In terms of assembly, homodimer; homodimerizes via its C2 domains. Interacts with p65/RELA (via N-terminus); this interaction induces proteolytic cleavage of p65/RELA subunit and inhibition of NF-kappa-B transcriptional activity. Interacts (via VWFA domain) with ACTB, CCDC22, MYCBP2, PPP5C, RDX and UBE2O. It depends on Ca(2+) as a cofactor. Expressed in liver, brain, heart, intestine, kidney and lung (at protein level).

The protein localises to the nucleus. It is found in the cytoplasm. Its subcellular location is the cell membrane. Calcium-dependent phospholipid-binding protein that plays a role in calcium-mediated intracellular processes. Involved in the TNF-alpha receptor signaling pathway in a calcium-dependent manner. Exhibits calcium-dependent phospholipid binding properties. Plays a role in neuronal progenitor cell differentiation; induces neurite outgrowth via a AKT-dependent signaling cascade and calcium-independent manner. May recruit target proteins to the cell membrane in a calcium-dependent manner. May function in membrane trafficking. Involved in TNF-alpha-induced NF-kappa-B transcriptional repression by inducing endoprotease processing of the transcription factor NF-kappa-B p65/RELA subunit. Also induces endoprotease processing of NF-kappa-B p50/NFKB1, p52/NFKB2, RELB and REL. The polypeptide is Copine-1 (Rattus norvegicus (Rat)).